A 106-amino-acid chain; its full sequence is UPF0060 membrane protein Smed_0659 (106 aa).

3 helical membrane passes run 4 to 24, 31 to 51, and 61 to 81; these read FAIYFLAALAEIAGCFTFWAW, GLWLLPGMASLAIFAWLLTMV, and AAYGGIYIIASLCWLWVAEGA.

It belongs to the UPF0060 family.

Its subcellular location is the cell inner membrane. The chain is UPF0060 membrane protein Smed_0659 from Sinorhizobium medicae (strain WSM419) (Ensifer medicae).